Here is a 415-residue protein sequence, read N- to C-terminus: Histidine--tRNA ligase (415 aa).

The protein belongs to the class-II aminoacyl-tRNA synthetase family. As to quaternary structure, homodimer.

The protein resides in the cytoplasm. The catalysed reaction is tRNA(His) + L-histidine + ATP = L-histidyl-tRNA(His) + AMP + diphosphate + H(+). The chain is Histidine--tRNA ligase from Clostridium botulinum (strain Okra / Type B1).